Consider the following 444-residue polypeptide: Chromosome partition protein MukF (444 aa).

Residues 212–240 (LDETSGNLRELQDTLNAAGDKLQAQLLRI) form a leucine-zipper region.

This sequence belongs to the MukF family. In terms of assembly, interacts, and probably forms a ternary complex, with MukE and MukB via its C-terminal region. The complex formation is stimulated by calcium or magnesium. It is required for an interaction between MukE and MukB.

Its subcellular location is the cytoplasm. The protein localises to the nucleoid. Functionally, involved in chromosome condensation, segregation and cell cycle progression. May participate in facilitating chromosome segregation by condensation DNA from both sides of a centrally located replisome during cell division. Not required for mini-F plasmid partitioning. Probably acts via its interaction with MukB and MukE. Overexpression results in anucleate cells. It has a calcium binding activity. This is Chromosome partition protein MukF from Haemophilus influenzae (strain PittGG).